Reading from the N-terminus, the 1841-residue chain is Sodium channel protein type 4 subunit alpha (1841 aa).

Residues methionine 1–alanine 131 are Cytoplasmic-facing. Residues alanine 32–alanine 60 are compositionally biased toward basic and acidic residues. The disordered stretch occupies residues alanine 32–asparagine 63. The stretch at methionine 113 to asparagine 448 is one I repeat. Residues leucine 132–methionine 150 form a helical membrane-spanning segment. Residues serine 151–serine 157 are Extracellular-facing. A helical transmembrane segment spans residues lysine 158–alanine 178. Topologically, residues arginine 179 to proline 192 are cytoplasmic. Residues tryptophan 193–valine 210 form a helical membrane-spanning segment. At aspartate 211–serine 216 the chain is on the extracellular side. Asparagine 214 is a glycosylation site (N-linked (GlcNAc...) asparagine). The helical transmembrane segment at alanine 217–isoleucine 233 threads the bilayer. At proline 234 to aspartate 252 the chain is on the cytoplasmic side. Residues valine 253–phenylalanine 272 traverse the membrane as a helical segment. The Extracellular segment spans residues methionine 273 to threonine 385. The cysteines at positions 280 and 354 are disulfide-linked. N-linked (GlcNAc...) asparagine glycans are attached at residues asparagine 288, asparagine 291, asparagine 297, asparagine 303, asparagine 315, asparagine 327, and asparagine 356. Residues cysteine 363 and cysteine 369 are joined by a disulfide bond. The pore-forming intramembrane region spans phenylalanine 386–leucine 410. The Extracellular segment spans residues arginine 411–tyrosine 417. Residues methionine 418–alanine 438 form a helical membrane-spanning segment. The Cytoplasmic segment spans residues valine 439–proline 572. Residues alanine 484 to serine 522 are disordered. The II repeat unit spans residues cysteine 554–glycine 826. A helical membrane pass occupies residues phenylalanine 573–methionine 591. Topologically, residues glutamate 592–asparagine 602 are extracellular. Residues valine 603 to lysine 622 traverse the membrane as a helical segment. The Cytoplasmic portion of the chain corresponds to leucine 623 to tryptophan 636. The chain crosses the membrane as a helical span at residues asparagine 637–valine 656. The Extracellular portion of the chain corresponds to glutamine 657–glycine 658. The helical transmembrane segment at leucine 659 to serine 676 threads the bilayer. Residues tryptophan 677 to glycine 692 lie on the Cytoplasmic side of the membrane. Residues alanine 693 to valine 711 traverse the membrane as a helical segment. Topologically, residues glycine 712–aspartate 740 are extracellular. An intrachain disulfide couples cysteine 725 to cysteine 731. The segment at residues phenylalanine 741–tryptophan 761 is an intramembrane region (pore-forming). Topologically, residues aspartate 762–cysteine 772 are extracellular. A disulfide bridge connects residues cysteine 763 and cysteine 772. Residues leucine 773 to phenylalanine 791 traverse the membrane as a helical segment. At leucine 792–tryptophan 1026 the chain is on the cytoplasmic side. 2 disordered regions span residues glutamate 854–glycine 896 and serine 925–leucine 983. The span at glutamate 867 to isoleucine 887 shows a compositional bias: basic and acidic residues. 2 stretches are compositionally biased toward acidic residues: residues serine 925–proline 941 and glutamate 969–leucine 983. An III repeat occupies arginine 1007–leucine 1320. A helical membrane pass occupies residues phenylalanine 1027–phenylalanine 1044. The Extracellular portion of the chain corresponds to glutamate 1045–threonine 1057. A helical membrane pass occupies residues isoleucine 1058–leucine 1076. Topologically, residues lysine 1077–alanine 1090 are cytoplasmic. Residues tryptophan 1091–asparagine 1109 traverse the membrane as a helical segment. Topologically, residues tryptophan 1110–glycine 1117 are extracellular. A helical transmembrane segment spans residues proline 1118–arginine 1136. The Cytoplasmic segment spans residues phenylalanine 1137–serine 1153. Residues isoleucine 1154 to valine 1173 traverse the membrane as a helical segment. The Extracellular portion of the chain corresponds to asparagine 1174–valine 1224. A disulfide bond links cysteine 1183 and cysteine 1203. Residues asparagine 1185 and asparagine 1199 are each glycosylated (N-linked (GlcNAc...) asparagine). The segment at residues glycine 1225–alanine 1246 is an intramembrane region (pore-forming). Over alanine 1247–leucine 1263 the chain is Extracellular. Residues tyrosine 1264 to isoleucine 1285 form a helical membrane-spanning segment. Residues glycine 1286–valine 1348 lie on the Cytoplasmic side of the membrane. Positions isoleucine 1304–methionine 1306 are important for rapid channel inactivation. The IV repeat unit spans residues isoleucine 1329 to glutamine 1627. Residues phenylalanine 1349–valine 1366 traverse the membrane as a helical segment. Residues glutamate 1367 to aspartate 1377 are Extracellular-facing. The helical transmembrane segment at isoleucine 1378–leucine 1396 threads the bilayer. At lysine 1397–isoleucine 1408 the chain is on the cytoplasmic side. Residues glycine 1409–alanine 1426 form a helical membrane-spanning segment. Over leucine 1427–threonine 1439 the chain is Extracellular. The chain crosses the membrane as a helical span at residues leucine 1440 to isoleucine 1456. Over arginine 1457 to alanine 1475 the chain is Cytoplasmic. The chain crosses the membrane as a helical span at residues leucine 1476–phenylalanine 1493. The Extracellular segment spans residues glycine 1494–threonine 1515. An intramembrane region (pore-forming) is located at residues phenylalanine 1516–proline 1538. The Extracellular segment spans residues isoleucine 1539–glycine 1568. An intrachain disulfide couples cysteine 1547 to cysteine 1562. The helical transmembrane segment at isoleucine 1569–isoleucine 1591 threads the bilayer. Over leucine 1592–valine 1841 the chain is Cytoplasmic. In terms of domain architecture, IQ spans glutamate 1721 to histidine 1750. Residues serine 1776–threonine 1794 show a composition bias toward basic and acidic residues. The tract at residues serine 1776–valine 1841 is disordered. Residues threonine 1801–alanine 1812 are compositionally biased toward polar residues. Over residues threonine 1814–proline 1826 the composition is skewed to pro residues.

Belongs to the sodium channel (TC 1.A.1.10) family. Nav1.4/SCN4A subfamily. The Nav1.4 voltage-gated sodium channel consists of an ion-conducting alpha subunit SCN4A which is functional on its own and a regulatory beta subunit SCN1B. SCN1B strongly enhances the presence of SCN4A at the cell surface. SCN1B is also required for rapid channel inactivation and recovery after inactivation. It prevents the decrease of channel activity in response to repetitive, high-frequency depolarizations. Interacts with the syntrophins SNTA1, SNTB1 and SNTB2 (via PDZ domain); probably links SCN4A to the actin cytoskeleton and the extracellular matrix via the dystrophin-associated protein complex and regulates its localization in muscle cells. Interacts with TMEM233; probable regulator of the channel. In terms of tissue distribution, detected in quadriceps muscle (at protein level). Detected in hind-limb skeletal muscles, but not in heart or brain. Detected at low levels in the myocardium. According to Pubme=26427606 detected also in brain.

The protein resides in the cell membrane. It carries out the reaction Na(+)(in) = Na(+)(out). Its activity is regulated as follows. The channel is inhibited by tetrodotoxin. Its function is as follows. Pore-forming subunit of Nav1.4, a voltage-gated sodium (Nav) channel that directly mediates the depolarizing phase of action potentials in excitable membranes. Navs, also called VGSCs (voltage-gated sodium channels) or VDSCs (voltage-dependent sodium channels), operate by switching between closed and open conformations depending on the voltage difference across the membrane. In the open conformation they allow Na(+) ions to selectively pass through the pore, along their electrochemical gradient. The influx of Na+ ions provokes membrane depolarization, initiating the propagation of electrical signals throughout cells and tissues. Highly expressed in skeletal muscles, Nav1.4 generates the action potential crucial for muscle contraction. The protein is Sodium channel protein type 4 subunit alpha of Mus musculus (Mouse).